The following is a 51-amino-acid chain: Large ribosomal subunit protein eL39 (51 aa).

It belongs to the eukaryotic ribosomal protein eL39 family.

The chain is Large ribosomal subunit protein eL39 (RpL39) from Drosophila melanogaster (Fruit fly).